A 1525-amino-acid chain; its full sequence is MGIESLCSADASEPFWDWNLTWHTENPDFTQCFQNTVLVWVPCIYLWVCFPAYFLYLRSHDRGYIQMSILNKAKTALGLILWIVCWADLFYSFWERSQNIFRAPFFLISPTVLGITMLLATFLIQHERLKGVQSSGVMMIFWLISLLCATVIFRSKIMLALNTDTEVDAFRYVTFCTYFILLLVQLILSCFPEKPPLFSEAVNDPKPCPEFSASFLSRITFWWITGLMIQGHRRPLEAKDLWSLNKEDTSEEIVPGLAKNWAKEWAKTKRQPLNMLYSSKKQQKSSDSNGEVMEEAEALIIKPSQRSSEASLSKVLYKTFGPYFLMSFLFKAAHDLLMFTGPEILKLLINFVNNKSAPNWQGYFYTGLLFVCACLQTLILHQYFHICFVTGMRLKTAIVGVIYRKALVITNSARKTSTVGEIVNLMSVDAQRFMDLATYINMIWSAPLQVILALYLLWRNLGPSVLAGVAVMILLVPINAVMAMKTKTYQVAQMKSKDNRIKLMNEILNGIKVLKLYAWELAFREKVLEIRQKELKVLKKSAYLAAMGTFTWVCAPFLVALSTFAVYVKVNKNNILDAQKAFVSLALFNILRFPLNILPMVISSIVEASVSLKRLRVFLSHEELDPDSIIRGPITNAEGSIVVKNATFSWSKTDPPSLNSINFTVPEGSLIAVVGQVGCGKSSLLSALLGEMDKKEGYVVVKGSIAYVPQQAWIQNATLEDNIIFGREMNESRYKRVIEACALLPDLEILPMGDRTEIGEKGVNLSGGQKQRVSLARAVYCNADTYLFDDPLSAVDAHVGKHIFEKVIGPKGILKNKTRVLVTHAVNYLPQMDTILVMTDGEISEMGSYQELLKQDGAFAEFLRTYANAEQSMESSDASSPSGKEGKPVENGVLVNDATGKLMHRQLSNSSTYSRETGKSQHQSSTAELQKPLAEKNSWKLTEADTAKTGRVKATVYWEYMKAIGLYISFLSVFLFMCNHIASLASNYWLSLWTDDPVVNGTQQYTNVRLGVYGALGISQGIAVFGYSMAVSIGGIFASRHLHLDLLHNVLRSPMSFFERTPSGNLVSRFSKEIDTIDSTIPPIIKMFMGSTFNVIGACIIILLATPIAAVVIPPLGLVYLLVQRFYVATSRQLKRLESVSRSPVYSHFNETLLGVSVIRAFEEQKRFIKQNDMKVDENQKAYYPSIVANRWLAVRLEFVGNCIVLFAALFAVIARNKLSPGLIGLSVSYSLQITAYLNWLVRMTSDLETNIVAVERVKEYAEMEKEAEWSIEETAPASTWPQEGKVEFRGFGLRYREDLDLVLKNINITINGGEKVGIVGRTGAGKSSLTLGLFRINEAAEGEIIIDGINIAKIGLHDLRFKITIIPQDPILFSGSLRMNLDPFDQHSDEDIWRSLELAHLKNFVSSLPDKLNHECSEGGENLSVGQRQLVCLARALLRKSKILVLDEATAAVDLETDNLIQSTIKSQFEECTVLTIAHRLNTIMDYTRVLVLDRGEVVECDSPDNLLQAKGLFYSMAKDSGLA.

Residues 1 to 33 (MGIESLCSADASEPFWDWNLTWHTENPDFTQCF) are Extracellular-facing. Residues 34–54 (QNTVLVWVPCIYLWVCFPAYF) form a helical membrane-spanning segment. Over 55 to 74 (LYLRSHDRGYIQMSILNKAK) the chain is Cytoplasmic. The helical transmembrane segment at 75-95 (TALGLILWIVCWADLFYSFWE) threads the bilayer. Residues 96–100 (RSQNI) lie on the Extracellular side of the membrane. Residues 101-121 (FRAPFFLISPTVLGITMLLAT) traverse the membrane as a helical segment. At 122–133 (FLIQHERLKGVQ) the chain is on the cytoplasmic side. The helical transmembrane segment at 134-154 (SSGVMMIFWLISLLCATVIFR) threads the bilayer. The Extracellular portion of the chain corresponds to 155-172 (SKIMLALNTDTEVDAFRY). Residues 173–193 (VTFCTYFILLLVQLILSCFPE) form a helical membrane-spanning segment. Residues 194–315 (KPPLFSEAVN…RSSEASLSKV (122 aa)) are Cytoplasmic-facing. The chain crosses the membrane as a helical span at residues 316–336 (LYKTFGPYFLMSFLFKAAHDL). Residues 324-607 (FLMSFLFKAA…LPMVISSIVE (284 aa)) form the ABC transmembrane type-1 1 domain. At 337 to 362 (LMFTGPEILKLLINFVNNKSAPNWQG) the chain is on the extracellular side. A helical membrane pass occupies residues 363 to 383 (YFYTGLLFVCACLQTLILHQY). Topologically, residues 384–439 (FHICFVTGMRLKTAIVGVIYRKALVITNSARKTSTVGEIVNLMSVDAQRFMDLATY) are cytoplasmic. Residues 440–460 (INMIWSAPLQVILALYLLWRN) form a helical membrane-spanning segment. Residues 461–463 (LGP) are Extracellular-facing. A helical membrane pass occupies residues 464–484 (SVLAGVAVMILLVPINAVMAM). Over 485 to 546 (KTKTYQVAQM…VLKKSAYLAA (62 aa)) the chain is Cytoplasmic. The helical transmembrane segment at 547–567 (MGTFTWVCAPFLVALSTFAVY) threads the bilayer. Residues 568–589 (VKVNKNNILDAQKAFVSLALFN) are Extracellular-facing. A helical transmembrane segment spans residues 590 to 610 (ILRFPLNILPMVISSIVEASV). Over 611 to 961 (SLKRLRVFLS…VKATVYWEYM (351 aa)) the chain is Cytoplasmic. The ABC transporter 1 domain occupies 641 to 865 (IVVKNATFSW…DGAFAEFLRT (225 aa)). An ATP-binding site is contributed by 675–682 (GQVGCGKS). Composition is skewed to polar residues over residues 871–882 (QSMESSDASSPS) and 908–928 (SNSS…STAE). Disordered stretches follow at residues 871–891 (QSME…PVEN) and 908–930 (SNSS…AELQ). The helical transmembrane segment at 962 to 982 (KAIGLYISFLSVFLFMCNHIA) threads the bilayer. An ABC transmembrane type-1 2 domain is found at 969–1250 (SFLSVFLFMC…LVRMTSDLET (282 aa)). Topologically, residues 983-1019 (SLASNYWLSLWTDDPVVNGTQQYTNVRLGVYGALGIS) are extracellular. Residues 1020–1040 (QGIAVFGYSMAVSIGGIFASR) traverse the membrane as a helical segment. The Cytoplasmic portion of the chain corresponds to 1041–1083 (HLHLDLLHNVLRSPMSFFERTPSGNLVSRFSKEIDTIDSTIPP). Residues 1084–1104 (IIKMFMGSTFNVIGACIIILL) form a helical membrane-spanning segment. Position 1105 (A1105) is a topological domain, extracellular. The helical transmembrane segment at 1106-1126 (TPIAAVVIPPLGLVYLLVQRF) threads the bilayer. The Cytoplasmic segment spans residues 1127–1197 (YVATSRQLKR…VANRWLAVRL (71 aa)). A helical transmembrane segment spans residues 1198 to 1218 (EFVGNCIVLFAALFAVIARNK). The Extracellular segment spans residues 1219-1220 (LS). Residues 1221-1241 (PGLIGLSVSYSLQITAYLNWL) traverse the membrane as a helical segment. Topologically, residues 1242-1525 (VRMTSDLETN…YSMAKDSGLA (284 aa)) are cytoplasmic. The ABC transporter 2 domain occupies 1289-1521 (FRGFGLRYRE…KGLFYSMAKD (233 aa)). 1321-1328 (GRTGAGKS) contacts ATP.

This sequence belongs to the ABC transporter superfamily. ABCC family. Conjugate transporter (TC 3.A.1.208) subfamily.

The protein resides in the cell membrane. The catalysed reaction is ATP + H2O + xenobioticSide 1 = ADP + phosphate + xenobioticSide 2.. The enzyme catalyses an S-substituted glutathione(in) + ATP + H2O = an S-substituted glutathione(out) + ADP + phosphate + H(+). It catalyses the reaction sphing-4-enine 1-phosphate(in) + ATP + H2O = sphing-4-enine 1-phosphate(out) + ADP + phosphate + H(+). It carries out the reaction leukotriene C4(in) + ATP + H2O = leukotriene C4(out) + ADP + phosphate + H(+). The catalysed reaction is 17beta-estradiol 17-O-(beta-D-glucuronate)(in) + ATP + H2O = 17beta-estradiol 17-O-(beta-D-glucuronate)(out) + ADP + phosphate + H(+). The enzyme catalyses 2',3'-cGAMP(in) + ATP + H2O = 2',3'-cGAMP(out) + ADP + phosphate + H(+). Its function is as follows. Mediates export of organic anions and drugs from the cytoplasm. Mediates ATP-dependent transport of glutathione and glutathione conjugates, leukotriene C4, estradiol-17-beta-o-glucuronide and other xenobiotics. Hydrolyzes ATP with low efficiency. Mediates ATP-dependent, GSH-independent cyclic GMP-AMP (cGAMP) export. Thus, by limiting intracellular cGAMP concentrations negatively regulates the cGAS-STING pathway. This chain is Multidrug resistance-associated protein 1, found in Gallus gallus (Chicken).